Reading from the N-terminus, the 142-residue chain is Non-specific lipid transfer protein GPI-anchored 34 (142 aa).

The N-terminal stretch at 1–22 (MAVAVTAVLFLAVVIAPQWTET) is a signal peptide. Residues 21–43 (ETKKPPRPSDTSDTSGTSGRDRR) form a disordered region. The segment covering 29 to 38 (SDTSDTSGTS) has biased composition (low complexity). 4 disulfides stabilise this stretch: Cys46–Cys85, Cys57–Cys69, Cys70–Cys106, and Cys83–Cys114. Asn120 carries the GPI-anchor amidated asparagine lipid modification. Positions 121–142 (GGATKKIVASMGLFGVVASLFF) are cleaved as a propeptide — removed in mature form.

Belongs to the plant LTP family.

Its subcellular location is the cell membrane. Probable lipid transfer protein. This chain is Non-specific lipid transfer protein GPI-anchored 34, found in Arabidopsis thaliana (Mouse-ear cress).